Consider the following 485-residue polypeptide: Serine/threonine-protein kinase 4 (485 aa).

One can recognise a Protein kinase domain in the interval 30–281; it reads FDVLEKLGEG…ATELLQHPFI (252 aa). ATP contacts are provided by residues 36–44 and Lys59; that span reads LGEGSYGSV. The active-site Proton acceptor is Asp149. Thr183 carries the phosphothreonine; by autocatalysis modification. Residues 287–313 are a coiled coil; it reads ESILRHLINEAQDAKLKRTELKQREVE. The SARAH domain maps to 431-478; sequence YSFLKDWSVTELQLRLNSLDPMMEQEIEEIHHKYQAKRQPILEAIESK.

The protein belongs to the protein kinase superfamily. STE Ser/Thr protein kinase family. STE20 subfamily. In terms of assembly, homodimer; mediated via the coiled-coil region. It depends on Mg(2+) as a cofactor. Post-translationally, autophosphorylated on Thr-183. Proteolytically cleaved by caspase-3 during apoptosis at Asp-326 resulting in a 37 kDa form. Proteolytic cleavage results in kinase activation and nuclear translocation of the truncated form (MST1/N).

The protein resides in the cytoplasm. It is found in the nucleus. The catalysed reaction is L-seryl-[protein] + ATP = O-phospho-L-seryl-[protein] + ADP + H(+). It catalyses the reaction L-threonyl-[protein] + ATP = O-phospho-L-threonyl-[protein] + ADP + H(+). With respect to regulation, the C-terminal non-catalytic region inhibits the kinase activity, the enzyme is activated by caspase-cleavage. Homodimerization and autophosphorylation of Thr-183 is also required for full activation. In terms of biological role, stress-activated, pro-apoptotic kinase which, following caspase-cleavage, enters the nucleus and induces chromatin condensation followed by internucleosomal DNA fragmentation. Key component of the Hippo signaling pathway which plays a pivotal role in organ size control and tumor suppression by restricting proliferation and promoting apoptosis. The core of this pathway is composed of a kinase cascade wherein stk3/mst2 and stk4/mst1, in complex with its regulatory protein sav1, phosphorylates and activates lats1/2 in complex with its regulatory protein mob1, which in turn phosphorylates and inactivates yap1 oncoprotein and wwtr1/taz. Phosphorylation of yap1 by lats2 inhibits its translocation into the nucleus to regulate cellular genes important for cell proliferation, cell death, and cell migration. Phosphorylates 'Ser-14' of histone H2B (H2BS14ph) during apoptosis. The protein is Serine/threonine-protein kinase 4 (stk4) of Xenopus tropicalis (Western clawed frog).